Here is a 283-residue protein sequence, read N- to C-terminus: Pantothenate synthetase (283 aa).

30-37 (MGNLHDGH) contacts ATP. His-37 acts as the Proton donor in catalysis. Gln-61 is a (R)-pantoate binding site. Gln-61 contacts beta-alanine. 149 to 152 (GEKD) is a binding site for ATP. Gln-155 contributes to the (R)-pantoate binding site. ATP contacts are provided by residues Met-178 and 186-189 (LSSR).

The protein belongs to the pantothenate synthetase family. As to quaternary structure, homodimer.

It is found in the cytoplasm. The enzyme catalyses (R)-pantoate + beta-alanine + ATP = (R)-pantothenate + AMP + diphosphate + H(+). It participates in cofactor biosynthesis; (R)-pantothenate biosynthesis; (R)-pantothenate from (R)-pantoate and beta-alanine: step 1/1. Its activity is regulated as follows. Activation requires a combination of a divalent cation, magnesium or manganese, and a monovalent cation, potassium or ammonium. Above the optimum concentration for activation, magnesium and manganese are rather inhibitory. Also activated by 2-mercaptoethanol, dithiothreitol, cysteine and glutathione. Inhibited by divalent cations (mercury, cobalt, zinc, copper, silver), chelating agents (EDTA, EGTA and o-phenanthroline), and analogs of beta-alanine (taurine, gamma-aminobutyrate, gamma-amino-beta-hydroxybutyrate). Functionally, catalyzes the condensation of pantoate with beta-alanine in an ATP-dependent reaction via a pantoyl-adenylate intermediate. The chain is Pantothenate synthetase (panC) from Escherichia coli (strain K12).